The following is a 564-amino-acid chain: Glutamate--tRNA ligase (564 aa).

Residues 107–117 (PNPNGPPTLGS) carry the 'HIGH' region motif.

This sequence belongs to the class-I aminoacyl-tRNA synthetase family. Glutamate--tRNA ligase type 2 subfamily.

The protein localises to the cytoplasm. It carries out the reaction tRNA(Glu) + L-glutamate + ATP = L-glutamyl-tRNA(Glu) + AMP + diphosphate. Its function is as follows. Catalyzes the attachment of glutamate to tRNA(Glu) in a two-step reaction: glutamate is first activated by ATP to form Glu-AMP and then transferred to the acceptor end of tRNA(Glu). The protein is Glutamate--tRNA ligase of Methanothrix thermoacetophila (strain DSM 6194 / JCM 14653 / NBRC 101360 / PT) (Methanosaeta thermophila).